We begin with the raw amino-acid sequence, 116 residues long: Fluoride-specific ion channel FluC 1 (116 aa).

4 consecutive transmembrane segments (helical) span residues 2–22 (LVLVGLAGAGAAVGALSRYGI), 33–53 (PLPIATLFINLTGALLLGWIL), 63–83 (IFLGTGIMGGYTTFSTMINEL), and 96–116 (WEYFGLSLVGGLVMVYLGTLI). Na(+) contacts are provided by Gly-71 and Thr-74.

This sequence belongs to the fluoride channel Fluc/FEX (TC 1.A.43) family.

The protein resides in the cell membrane. It catalyses the reaction fluoride(in) = fluoride(out). Na(+) is not transported, but it plays an essential structural role and its presence is essential for fluoride channel function. Fluoride-specific ion channel. Important for reducing fluoride concentration in the cell, thus reducing its toxicity. The polypeptide is Fluoride-specific ion channel FluC 1 (Lactiplantibacillus plantarum (strain ATCC BAA-793 / NCIMB 8826 / WCFS1) (Lactobacillus plantarum)).